The sequence spans 571 residues: MSQPWPAAEIARVILDGFDDYREHFRRITLGARERFEQARWQDIQRAAAARINLYEEKVAEVNGWLRKGFEGQVLLDVEQWPLVKNAYIRLIDPRLDDELSETWYNSLFCSLFSHDQISDGCMFIHTTRPSMRVHERAAQTRTYALTDRLKGLLRAIFADYAFDVPYGDLEADLSRLEEQLRECLPDWVCKDPQLKIELFTPVLYRNKGAYLVGRLYTPDEQWPLVIPLLHREGHGIEADALITDEAEVSIIFSFTRSYFMVDVPVPGEFVNFLKRILPGKHIAELYTSIGFYKHGKSEFYRALINHLANSDDRFVMAPGVRGMVMSVFTLPGFNTVFKIIKDRFSPSKTVDRATVIEKYRLVKSVDRVGRMADTQEFADFRFPQGKFDPECLAELLEVAPSTVSLEGDTVLIRHCWTERRMTPLNLYLEHASEGQVLEALEDYGLAIKQLAAANIFPGDMLLKNFGVTRHGRVVFYDYDEISFLTEVNFRHIPPPRYPEDEMSGEPWYSIGPHDVFPEEFPPFLFADIGQRRLFSRLHGELYDADYWKGLQEAIRAGKVIDVFPYRRKSR.

ATP-binding positions include 318–324 (APGVRGM) and Lys339. Asp374 is an active-site residue.

It belongs to the AceK family.

It localises to the cytoplasm. It catalyses the reaction L-seryl-[isocitrate dehydrogenase] + ATP = O-phospho-L-seryl-[isocitrate dehydrogenase] + ADP + H(+). Its function is as follows. Bifunctional enzyme which can phosphorylate or dephosphorylate isocitrate dehydrogenase (IDH) on a specific serine residue. This is a regulatory mechanism which enables bacteria to bypass the Krebs cycle via the glyoxylate shunt in response to the source of carbon. When bacteria are grown on glucose, IDH is fully active and unphosphorylated, but when grown on acetate or ethanol, the activity of IDH declines drastically concomitant with its phosphorylation. This is Isocitrate dehydrogenase kinase/phosphatase from Pseudomonas entomophila (strain L48).